The sequence spans 383 residues: Acetylornithine deacetylase (383 aa).

His-80 contributes to the Zn(2+) binding site. The active site involves Asp-82. Asp-112 lines the Zn(2+) pocket. Glu-144 is a catalytic residue. Positions 145, 169, and 355 each coordinate Zn(2+).

The protein belongs to the peptidase M20A family. ArgE subfamily. In terms of assembly, homodimer. Zn(2+) is required as a cofactor. The cofactor is Co(2+). Glutathione serves as cofactor.

It localises to the cytoplasm. It carries out the reaction N(2)-acetyl-L-ornithine + H2O = L-ornithine + acetate. The protein operates within amino-acid biosynthesis; L-arginine biosynthesis; L-ornithine from N(2)-acetyl-L-ornithine (linear): step 1/1. In terms of biological role, catalyzes the hydrolysis of the amide bond of N(2)-acetylated L-amino acids. Cleaves the acetyl group from N-acetyl-L-ornithine to form L-ornithine, an intermediate in L-arginine biosynthesis pathway, and a branchpoint in the synthesis of polyamines. This Escherichia coli O9:H4 (strain HS) protein is Acetylornithine deacetylase.